The chain runs to 117 residues: Hydrogenase maturation factor HypA (117 aa).

Residue H2 coordinates Ni(2+). C73, C76, C89, and C92 together coordinate Zn(2+).

Belongs to the HypA/HybF family.

Involved in the maturation of [NiFe] hydrogenases. Required for nickel insertion into the metal center of the hydrogenase. In Shewanella baltica (strain OS223), this protein is Hydrogenase maturation factor HypA.